The chain runs to 351 residues: Protein Wnt-2b-A (351 aa).

The N-terminal stretch at 1–16 is a signal peptide; it reads MHFAYILILLILTPRV. 11 disulfides stabilise this stretch: Cys-67/Cys-78, Cys-118/Cys-126, Cys-128/Cys-148, Cys-197/Cys-211, Cys-199/Cys-206, Cys-269/Cys-300, Cys-285/Cys-295, Cys-299/Cys-339, Cys-315/Cys-330, Cys-317/Cys-327, and Cys-322/Cys-323. An N-linked (GlcNAc...) asparagine glycan is attached at Asn-77. Ser-203 is lipidated: O-palmitoleoyl serine; by PORCN.

It belongs to the Wnt family. Post-translationally, palmitoleoylation is required for efficient binding to frizzled receptors. Depalmitoleoylation leads to Wnt signaling pathway inhibition. Expressed maternally in both vegetal and animal blastomeres with enrichment in the animal hemisphere. Expressed zygotically near the prosencephalic-mesencephalic boundary of the developing brain in neurula and tailbud stages, and also in non-brain areas at tadpole stages.

It localises to the secreted. The protein resides in the extracellular space. The protein localises to the extracellular matrix. Its function is as follows. Ligand for members of the frizzled family of seven transmembrane receptors. Functions in the canonical Wnt/beta-catenin signaling pathway. The chain is Protein Wnt-2b-A (wnt2b-a) from Xenopus laevis (African clawed frog).